The primary structure comprises 398 residues: Isopenicillin N epimerase (398 aa).

N6-(pyridoxal phosphate)lysine is present on lysine 219. The segment at 243–264 (PQVSWGYRPDGENPSDERNRFG) is disordered. Residues 251–264 (PDGENPSDERNRFG) show a composition bias toward basic and acidic residues.

Belongs to the class-V pyridoxal-phosphate-dependent aminotransferase family. The cofactor is pyridoxal 5'-phosphate.

The enzyme catalyses isopenicillin N = penicillin N. It participates in antibiotic biosynthesis; cephalosporin C biosynthesis. Its function is as follows. Catalyzes the reversible isomerization between isopenicillin N and penicillin N. This Amycolatopsis lactamdurans (Nocardia lactamdurans) protein is Isopenicillin N epimerase (cefD).